Here is a 61-residue protein sequence, read N- to C-terminus: Small ribosomal subunit protein uS14 (61 aa).

Residues cysteine 24, cysteine 27, cysteine 40, and cysteine 43 each contribute to the Zn(2+) site.

The protein belongs to the universal ribosomal protein uS14 family. Zinc-binding uS14 subfamily. As to quaternary structure, part of the 30S ribosomal subunit. Contacts proteins S3 and S10. Zn(2+) is required as a cofactor.

Binds 16S rRNA, required for the assembly of 30S particles and may also be responsible for determining the conformation of the 16S rRNA at the A site. The sequence is that of Small ribosomal subunit protein uS14 from Kosmotoga olearia (strain ATCC BAA-1733 / DSM 21960 / TBF 19.5.1).